The primary structure comprises 177 residues: Disulfide bond formation protein B (177 aa).

At 1 to 14 (MLIFFKNLSMKRST) the chain is on the cytoplasmic side. Residues 15–31 (WILLFISALVLESTALY) traverse the membrane as a helical segment. Residues 32-49 (FQHGMGLNPCVMCIYERV) lie on the Periplasmic side of the membrane. Cysteine 41 and cysteine 44 are joined by a disulfide. The chain crosses the membrane as a helical span at residues 50–65 (AILGILFSGLIGCIAP). The Cytoplasmic portion of the chain corresponds to 66-72 (KWLVLRI). Residues 73–90 (LALLIGLGSAVKGLLLAI) form a helical membrane-spanning segment. At 91–145 (KHLDYQINVYPWNQCAMVPDFPQTLPLDKWFPNIFMPSGSCSDITWSFLGFSMVQ) the chain is on the periplasmic side. Cysteine 105 and cysteine 131 are oxidised to a cystine. A helical transmembrane segment spans residues 146-164 (WIIVIFACYFLFFIILSIS). The Cytoplasmic segment spans residues 165–177 (QFKKVRKNRMLFR).

This sequence belongs to the DsbB family.

It is found in the cell inner membrane. In terms of biological role, required for disulfide bond formation in some periplasmic proteins. Acts by oxidizing the DsbA protein. This chain is Disulfide bond formation protein B, found in Histophilus somni (strain 129Pt) (Haemophilus somnus).